The primary structure comprises 190 residues: Inner membrane-spanning protein YciB (190 aa).

Helical transmembrane passes span 22–42 (IYVATGALIVATAIQIVLTFA), 50–70 (MQLITFAMVAIFGGMTIFLHD), 76–96 (WKVTIVYAIFAIGLAVSHAMG), 118–138 (INWAWVAFFSFCAGLNVYVAF), and 148–168 (FKVFGLLIATFAYMIATGFYI).

The protein belongs to the YciB family.

Its subcellular location is the cell inner membrane. Functionally, plays a role in cell envelope biogenesis, maintenance of cell envelope integrity and membrane homeostasis. The protein is Inner membrane-spanning protein YciB of Vibrio campbellii (strain ATCC BAA-1116).